A 118-amino-acid chain; its full sequence is V-type proton ATPase subunit G 1 (118 aa).

Alanine 2 carries the N-acetylalanine modification. Positions 25 to 90 (ARKRKARRLK…VQGMQSSQQR (66 aa)) are disordered. Residues 35–56 (QAKEEAQMEVEQYRREREHEFQ) are compositionally biased toward basic and acidic residues. 2 stretches are compositionally biased toward polar residues: residues 57–69 (SKQQ…QGNL) and 78–89 (RHQVQGMQSSQQ).

It belongs to the V-ATPase G subunit family. As to quaternary structure, V-ATPase is a heteromultimeric enzyme made up of two complexes: the ATP-hydrolytic V1 complex and the proton translocation V0 complex. The V1 complex consists of three catalytic AB heterodimers that form a heterohexamer, three peripheral stalks each consisting of EG heterodimers, one central rotor including subunits D and F, and the regulatory subunits C and H. The proton translocation complex V0 consists of the proton transport subunit a, a ring of proteolipid subunits c9c'', rotary subunit d, subunits e and f, and the accessory subunits ATP6AP1/Ac45 and ATP6AP2/PRR.

It localises to the apical cell membrane. Its function is as follows. Subunit of the V1 complex of vacuolar(H+)-ATPase (V-ATPase), a multisubunit enzyme composed of a peripheral complex (V1) that hydrolyzes ATP and a membrane integral complex (V0) that translocates protons. V-ATPase is responsible for acidifying and maintaining the pH of intracellular compartments and in some cell types, is targeted to the plasma membrane, where it is responsible for acidifying the extracellular environment. In aerobic conditions, involved in intracellular iron homeostasis, thus triggering the activity of Fe(2+) prolyl hydroxylase (PHD) enzymes, and leading to HIF1A hydroxylation and subsequent proteasomal degradation. The chain is V-type proton ATPase subunit G 1 (ATP6V1G1) from Pan troglodytes (Chimpanzee).